Consider the following 272-residue polypeptide: Glutamate racemase (272 aa).

Residues 10–11 (DS) and 42–43 (YG) each bind substrate. Cys-73 acts as the Proton donor/acceptor in catalysis. 74–75 (NT) contacts substrate. Residue Cys-183 is the Proton donor/acceptor of the active site. 184–185 (TH) is a binding site for substrate.

It belongs to the aspartate/glutamate racemases family.

The enzyme catalyses L-glutamate = D-glutamate. The protein operates within cell wall biogenesis; peptidoglycan biosynthesis. Functionally, provides the (R)-glutamate required for cell wall biosynthesis. The chain is Glutamate racemase from Leifsonia xyli subsp. xyli (strain CTCB07).